Reading from the N-terminus, the 570-residue chain is Sulfite reductase [NADPH] hemoprotein beta-component (570 aa).

Residues Cys-434, Cys-440, Cys-479, and Cys-483 each coordinate [4Fe-4S] cluster. Cys-483 contacts siroheme.

The protein belongs to the nitrite and sulfite reductase 4Fe-4S domain family. Alpha(8)-beta(8). The alpha component is a flavoprotein, the beta component is a hemoprotein. Requires siroheme as cofactor. [4Fe-4S] cluster is required as a cofactor.

It carries out the reaction hydrogen sulfide + 3 NADP(+) + 3 H2O = sulfite + 3 NADPH + 4 H(+). It participates in sulfur metabolism; hydrogen sulfide biosynthesis; hydrogen sulfide from sulfite (NADPH route): step 1/1. Component of the sulfite reductase complex that catalyzes the 6-electron reduction of sulfite to sulfide. This is one of several activities required for the biosynthesis of L-cysteine from sulfate. The sequence is that of Sulfite reductase [NADPH] hemoprotein beta-component from Salmonella newport (strain SL254).